A 223-amino-acid polypeptide reads, in one-letter code: Thiamine-phosphate synthase (223 aa).

Residues 45–49 (QYREK) and N77 contribute to the 4-amino-2-methyl-5-(diphosphooxymethyl)pyrimidine site. Mg(2+)-binding residues include D78 and D97. Residue T116 coordinates 4-amino-2-methyl-5-(diphosphooxymethyl)pyrimidine. Residue 142–144 (SYT) participates in 2-[(2R,5Z)-2-carboxy-4-methylthiazol-5(2H)-ylidene]ethyl phosphate binding. Residue K145 coordinates 4-amino-2-methyl-5-(diphosphooxymethyl)pyrimidine. Residues G173 and 193-194 (VT) each bind 2-[(2R,5Z)-2-carboxy-4-methylthiazol-5(2H)-ylidene]ethyl phosphate.

This sequence belongs to the thiamine-phosphate synthase family. The cofactor is Mg(2+).

The enzyme catalyses 2-[(2R,5Z)-2-carboxy-4-methylthiazol-5(2H)-ylidene]ethyl phosphate + 4-amino-2-methyl-5-(diphosphooxymethyl)pyrimidine + 2 H(+) = thiamine phosphate + CO2 + diphosphate. It carries out the reaction 2-(2-carboxy-4-methylthiazol-5-yl)ethyl phosphate + 4-amino-2-methyl-5-(diphosphooxymethyl)pyrimidine + 2 H(+) = thiamine phosphate + CO2 + diphosphate. The catalysed reaction is 4-methyl-5-(2-phosphooxyethyl)-thiazole + 4-amino-2-methyl-5-(diphosphooxymethyl)pyrimidine + H(+) = thiamine phosphate + diphosphate. It participates in cofactor biosynthesis; thiamine diphosphate biosynthesis; thiamine phosphate from 4-amino-2-methyl-5-diphosphomethylpyrimidine and 4-methyl-5-(2-phosphoethyl)-thiazole: step 1/1. In terms of biological role, condenses 4-methyl-5-(beta-hydroxyethyl)thiazole monophosphate (THZ-P) and 2-methyl-4-amino-5-hydroxymethyl pyrimidine pyrophosphate (HMP-PP) to form thiamine monophosphate (TMP). The protein is Thiamine-phosphate synthase of Dictyoglomus thermophilum (strain ATCC 35947 / DSM 3960 / H-6-12).